The primary structure comprises 297 residues: Large ribosomal subunit protein uL18 (297 aa).

The residue at position 2 (Gly2) is an N-acetylglycine. N6-acetyllysine occurs at positions 5 and 48. Residue Ser185 is modified to Phosphoserine. Lys220 carries the post-translational modification N6-acetyllysine; alternate. Lys220 is covalently cross-linked (Glycyl lysine isopeptide (Lys-Gly) (interchain with G-Cter in SUMO1); alternate). Lys220 participates in a covalent cross-link: Glycyl lysine isopeptide (Lys-Gly) (interchain with G-Cter in SUMO2); alternate. Thr232 is subject to Phosphothreonine. Positions Tyr253–Ser297 are disordered. Basic residues predominate over residues Lys258–Arg268. Ser272 bears the Phosphoserine mark.

The protein belongs to the universal ribosomal protein uL18 family. As to quaternary structure, component of the large ribosomal subunit (LSU). Part of the 5S RNP complex, which is a LSU subcomplex composed of the 5S RNA, RPL5 and RPL11. Component of a hexameric 5S RNP precursor complex, composed of 5S RNA, RRS1, RPF2/BXDC1, RPL5, RPL11 and HEATR3; this complex acts as a precursor for ribosome assembly. Interacts with NVL in an ATP-dependent manner. Interacts with RRP1B. Interacts with IPO5, IPO7 and KPNB1; these interactions may be involved in RPL5 nuclear import for the assembly of ribosomal subunits. Interacts with RRP1B.

The protein resides in the cytoplasm. Its subcellular location is the nucleus. It localises to the nucleolus. Component of the ribosome, a large ribonucleoprotein complex responsible for the synthesis of proteins in the cell. The small ribosomal subunit (SSU) binds messenger RNAs (mRNAs) and translates the encoded message by selecting cognate aminoacyl-transfer RNA (tRNA) molecules. The large subunit (LSU) contains the ribosomal catalytic site termed the peptidyl transferase center (PTC), which catalyzes the formation of peptide bonds, thereby polymerizing the amino acids delivered by tRNAs into a polypeptide chain. The nascent polypeptides leave the ribosome through a tunnel in the LSU and interact with protein factors that function in enzymatic processing, targeting, and the membrane insertion of nascent chains at the exit of the ribosomal tunnel. As part of the 5S RNP/5S ribonucleoprotein particle it is an essential component of the LSU, required for its formation and the maturation of rRNAs. It also couples ribosome biogenesis to p53/TP53 activation. As part of the 5S RNP it accumulates in the nucleoplasm and inhibits MDM2, when ribosome biogenesis is perturbed, mediating the stabilization and the activation of TP53. The chain is Large ribosomal subunit protein uL18 (RPL5) from Macaca fascicularis (Crab-eating macaque).